A 936-amino-acid chain; its full sequence is Protein SIEL (936 aa).

In terms of assembly, interacts with SHR, MGP, SCR, JKD, CPC, TMO7 and AGL21, but not with LFY or STM.

The protein resides in the nucleus. Its subcellular location is the endosome. The protein localises to the cytoplasm. It is found in the cell cortex. In terms of biological role, intracellular shuttle that promotes movement of SHR from the stele into the endodermis. Required for SHR association to endosomes and localization, and for intercellular movement of SHR. The protein is Protein SIEL of Arabidopsis thaliana (Mouse-ear cress).